We begin with the raw amino-acid sequence, 298 residues long: Triosephosphate isomerase, chloroplastic (298 aa).

Residues 1–18 (MAARRPSPPPASPPPPRP) show a composition bias toward pro residues. Residues 1–32 (MAARRPSPPPASPPPPRPRSTTTTRTTSSASA) form a disordered region. Residues 1–43 (MAARRPSPPPASPPPPRPRSTTTTRTTSSASAAPAAAQRLVAM) constitute a chloroplast transit peptide. Positions 19-32 (RSTTTTRTTSSASA) are enriched in low complexity. Substrate contacts are provided by asparagine 54 and lysine 56. The active-site Electrophile is histidine 138. Cysteine derivative is present on cysteine 186. Catalysis depends on glutamate 208, which acts as the Proton acceptor.

Belongs to the triosephosphate isomerase family. Homodimer.

Its subcellular location is the plastid. It is found in the chloroplast. The enzyme catalyses D-glyceraldehyde 3-phosphate = dihydroxyacetone phosphate. The protein operates within carbohydrate biosynthesis; Calvin cycle. The chain is Triosephosphate isomerase, chloroplastic from Secale cereale (Rye).